The sequence spans 117 residues: DNA-binding protein DDB_G0278111 (117 aa).

The tract at residues 1–40 is disordered; that stretch reads MSSEKEIQQQLSQMQGQGFDPEAQQRQEAQRQEANERRQG. Positions 8–22 are enriched in low complexity; sequence QQQLSQMQGQGFDPE. Basic and acidic residues predominate over residues 23–39; that stretch reads AQQRQEAQRQEANERRQ.

The protein belongs to the PDCD5 family.

The polypeptide is DNA-binding protein DDB_G0278111 (Dictyostelium discoideum (Social amoeba)).